A 485-amino-acid polypeptide reads, in one-letter code: Dual specificity protein phosphatase CDC14B (485 aa).

The tract at residues 1–38 is disordered; sequence MKRKSERRSAWATAPPCSRRSSSSSPGVKKSRSSTPQE. A Nucleolar localization signal motif is present at residues 1–54; sequence MKRKSERRSAWATAPPCSRRSSSSSPGVKKSRSSTPQELHRLEQQDDLYLDITD. Residues 15–28 show a composition bias toward low complexity; sequence PPCSRRSSSSSPGV. Residues 44–198 form an a region; sequence QQDDLYLDIT…AMQYGFFNFN (155 aa). The tract at residues 199-212 is linker; the sequence is SFNLDEYEHYEKAE. A b region spans residues 213–379; the sequence is NGDFNWIIPE…EGDYFRQKLR (167 aa). The region spanning 215–374 is the Tyrosine-protein phosphatase domain; the sequence is DFNWIIPERF…SSLWLEGDYF (160 aa). Catalysis depends on Cys314, which acts as the Phosphocysteine intermediate. Residues 402-424 are disordered; sequence LNGLENQDNQEPEPYSDDDEVSG. Over residues 409 to 422 the composition is skewed to acidic residues; sequence DNQEPEPYSDDDEV.

The protein belongs to the protein-tyrosine phosphatase family. Non-receptor class CDC14 subfamily. Interacts with FZR1/CDH1.

The protein localises to the nucleus. The protein resides in the nucleolus. Its subcellular location is the nucleoplasm. It carries out the reaction O-phospho-L-tyrosyl-[protein] + H2O = L-tyrosyl-[protein] + phosphate. The enzyme catalyses O-phospho-L-seryl-[protein] + H2O = L-seryl-[protein] + phosphate. The catalysed reaction is O-phospho-L-threonyl-[protein] + H2O = L-threonyl-[protein] + phosphate. Its function is as follows. Dual-specificity phosphatase involved in DNA damage response. Essential regulator of the G2 DNA damage checkpoint: following DNA damage, translocates to the nucleus and dephosphorylates FZR1/CDH1, a key activator of the anaphase promoting complex/cyclosome (APC/C). Dephosphorylates SIRT2 around early anaphase. Dephosphorylation of FZR1/CDH1 activates the APC/C, leading to the ubiquitination of PLK1, preventing entry into mitosis. Preferentially dephosphorylates proteins modified by proline-directed kinases. In Mus musculus (Mouse), this protein is Dual specificity protein phosphatase CDC14B (Cdc14b).